Consider the following 123-residue polypeptide: Small ribosomal subunit protein uS12 (123 aa).

The disordered stretch occupies residues 1–22 (MATINQLVRKPRKRKAKTSDVR). Position 89 is a 3-methylthioaspartic acid (Asp89). The disordered stretch occupies residues 101–123 (ALDTSGVNDRKRGRSKYGTKRPK). A compositionally biased stretch (basic residues) spans 111–123 (KRGRSKYGTKRPK).

This sequence belongs to the universal ribosomal protein uS12 family. Part of the 30S ribosomal subunit. Contacts proteins S8 and S17. May interact with IF1 in the 30S initiation complex.

With S4 and S5 plays an important role in translational accuracy. In terms of biological role, interacts with and stabilizes bases of the 16S rRNA that are involved in tRNA selection in the A site and with the mRNA backbone. Located at the interface of the 30S and 50S subunits, it traverses the body of the 30S subunit contacting proteins on the other side and probably holding the rRNA structure together. The combined cluster of proteins S8, S12 and S17 appears to hold together the shoulder and platform of the 30S subunit. This Teredinibacter turnerae (strain ATCC 39867 / T7901) protein is Small ribosomal subunit protein uS12.